The primary structure comprises 383 residues: MKSIVYEKKLPKLTSLEIAKNSKKKVICGMSGGVDSSVSAFILQQQGYQVEGLFMKNWEEDDDTDYCTAANDLADAQAVCDKLGIKLHKINFAAEYWDNVFEHFLAEYKAGRTPNPDILCNKEIKFKAFLEYAVEDLGADYIATGHYVRRSDVNGQTKLLRGLDSNKDQSYFLYTLSKDQVAQSLFPVGEIEKPIVRAIAEDLGLITAKKKDSTGICFIGERKFKEFLARFLPAQPGEIRMVDGKVIGKHDGLMYYTLGQRKGLGIGGVKGLSEDPFYVVEKDLINNVLVVAQGNDNSALLSQGLIATQLYWVDRLPIRQNLRCTVKTRYRQQDIACEVIPLNDDCVEVRFDEPQIAVTPGQSAVFYQGEECLGGGVIERQIK.

ATP-binding positions include 29–36 (GMSGGVDS) and Met-55. The tract at residues 115 to 117 (NPD) is interaction with target base in tRNA. The active-site Nucleophile is Cys-120. An intrachain disulfide couples Cys-120 to Cys-217. Gly-145 is a binding site for ATP. Residues 167–169 (KDQ) form an interaction with tRNA region. Cys-217 functions as the Cysteine persulfide intermediate in the catalytic mechanism. The interaction with tRNA stretch occupies residues 329–330 (RY).

The protein belongs to the MnmA/TRMU family.

It localises to the cytoplasm. It catalyses the reaction S-sulfanyl-L-cysteinyl-[protein] + uridine(34) in tRNA + AH2 + ATP = 2-thiouridine(34) in tRNA + L-cysteinyl-[protein] + A + AMP + diphosphate + H(+). In terms of biological role, catalyzes the 2-thiolation of uridine at the wobble position (U34) of tRNA, leading to the formation of s(2)U34. This chain is tRNA-specific 2-thiouridylase MnmA, found in Histophilus somni (strain 129Pt) (Haemophilus somnus).